A 410-amino-acid polypeptide reads, in one-letter code: Peptidase T (410 aa).

Residue histidine 79 coordinates Zn(2+). Aspartate 81 is a catalytic residue. Aspartate 142 contacts Zn(2+). The Proton acceptor role is filled by glutamate 176. Zn(2+)-binding residues include glutamate 177, aspartate 199, and histidine 381.

It belongs to the peptidase M20B family. It depends on Zn(2+) as a cofactor.

It localises to the cytoplasm. It catalyses the reaction Release of the N-terminal residue from a tripeptide.. Cleaves the N-terminal amino acid of tripeptides. In Bacillus thuringiensis subsp. konkukian (strain 97-27), this protein is Peptidase T.